The chain runs to 345 residues: Dihydroorotase (345 aa).

2 residues coordinate Zn(2+): His13 and His15. Residues 15–17 (HFR) and Asn41 contribute to the substrate site. Zn(2+) is bound by residues Lys98, His135, and His173. Position 98 is an N6-carboxylysine (Lys98). His135 serves as a coordination point for substrate. Leu218 provides a ligand contact to substrate. Zn(2+) is bound at residue Asp246. Residue Asp246 is part of the active site. 2 residues coordinate substrate: His250 and Ala262.

Belongs to the metallo-dependent hydrolases superfamily. DHOase family. Class II DHOase subfamily. Homodimer. Requires Zn(2+) as cofactor.

It catalyses the reaction (S)-dihydroorotate + H2O = N-carbamoyl-L-aspartate + H(+). Its pathway is pyrimidine metabolism; UMP biosynthesis via de novo pathway; (S)-dihydroorotate from bicarbonate: step 3/3. In terms of biological role, catalyzes the reversible cyclization of carbamoyl aspartate to dihydroorotate. This Shewanella pealeana (strain ATCC 700345 / ANG-SQ1) protein is Dihydroorotase.